Here is a 202-residue protein sequence, read N- to C-terminus: uncharacterized protein (202 aa).

Lys136 participates in a covalent cross-link: Isoglutamyl lysine isopeptide (Lys-Gln) (interchain with Q-Cter in protein Pup).

This is an uncharacterized protein from Mycobacterium tuberculosis (strain ATCC 25618 / H37Rv).